Reading from the N-terminus, the 132-residue chain is Small ribosomal subunit protein uS11 (132 aa).

A compositionally biased stretch (basic residues) spans 1–16 (MAAGMKGKRSRRRKER). Positions 1–20 (MAAGMKGKRSRRRKERKNVE) are disordered.

It belongs to the universal ribosomal protein uS11 family. As to quaternary structure, part of the 30S ribosomal subunit. Interacts with proteins S7 and S18. Binds to IF-3.

Functionally, located on the platform of the 30S subunit, it bridges several disparate RNA helices of the 16S rRNA. Forms part of the Shine-Dalgarno cleft in the 70S ribosome. This is Small ribosomal subunit protein uS11 from Clostridium botulinum (strain Loch Maree / Type A3).